The sequence spans 168 residues: Crossover junction endodeoxyribonuclease RuvC (168 aa).

Active-site residues include D7, E64, and D136. Mg(2+)-binding residues include D7, E64, and D136.

The protein belongs to the RuvC family. Homodimer which binds Holliday junction (HJ) DNA. The HJ becomes 2-fold symmetrical on binding to RuvC with unstacked arms; it has a different conformation from HJ DNA in complex with RuvA. In the full resolvosome a probable DNA-RuvA(4)-RuvB(12)-RuvC(2) complex forms which resolves the HJ. Requires Mg(2+) as cofactor.

Its subcellular location is the cytoplasm. It carries out the reaction Endonucleolytic cleavage at a junction such as a reciprocal single-stranded crossover between two homologous DNA duplexes (Holliday junction).. In terms of biological role, the RuvA-RuvB-RuvC complex processes Holliday junction (HJ) DNA during genetic recombination and DNA repair. Endonuclease that resolves HJ intermediates. Cleaves cruciform DNA by making single-stranded nicks across the HJ at symmetrical positions within the homologous arms, yielding a 5'-phosphate and a 3'-hydroxyl group; requires a central core of homology in the junction. The consensus cleavage sequence is 5'-(A/T)TT(C/G)-3'. Cleavage occurs on the 3'-side of the TT dinucleotide at the point of strand exchange. HJ branch migration catalyzed by RuvA-RuvB allows RuvC to scan DNA until it finds its consensus sequence, where it cleaves and resolves the cruciform DNA. The chain is Crossover junction endodeoxyribonuclease RuvC from Polynucleobacter necessarius subsp. necessarius (strain STIR1).